Reading from the N-terminus, the 695-residue chain is MAKELAAVYADVSALAMDLCLLSYADPATLDTKSLALTTGKFQSLHGTLLPLLRRQNAHECSGLSLELEHLLENVADALTTLGVCTSRKLSPEEHFSLLHLDITCNKHRSVRFNFYGNWALELKLSLINDVEIFFKRLSSVFYCIGSGSALEGLGEVLRFVGKLRGISPVPGPDLYVSNLPCLECLQEVCLTPNQGTSLQAMLPDTACSHICTPACGEPVRGLFENELKQLGLQTPESIPTTPCQSRVRQDDEIRQSSLMAVGDHHIFGEVTRSVLEISNLIYWSSGHSDATCDGDRDCSHLASLFTHEADMHKRRVDLAGCLGERGTPKHFFDCFRPDSLETLFCGGLFSSVEDTIESLQKDCSSAFYQQVNYTTALQKQNEFYVRLSKLLAAGQLNLGKCSTESCPSEARRQLVGGDKPEEVLRDAKHRQELYLQKVARDGFKKLSDCIRHQGHILSQTLGLRLWGSVIYNEASALQNHFLHRAQFISLPWQDLTVDCPTRFENSKYIKNSLYCQRLGREHVEILTLEFYKLITGPLSKRHTLFPSPPNVTLAQCFEAAGMLPHQKMMVSEMIWPSIEPKDWIEPNFNQFYSFENQDINHLQKRAWEYIRELVLSVSLYNRTWERELKILLTPQGSPGFKEPKPAGLTTGLYLTFETSAPLVLVDKKYGWIFKDLYALLYHHLQLSNHNDSQV.

The C3H1-type zinc-finger motif lies at cysteine 182–histidine 210. Residue tyrosine 621 to glutamate 628 coordinates ATP.

Belongs to the herpesviridae TRM1 protein family. Associates with TRM2 and TRM3 to form the tripartite terminase complex. Interacts with portal protein.

It is found in the host nucleus. In terms of biological role, component of the molecular motor that translocates viral genomic DNA in empty capsid during DNA packaging. Forms a tripartite terminase complex together with TRM2 and TRM3 in the host cytoplasm. Once the complex reaches the host nucleus, it interacts with the capsid portal vertex. This portal forms a ring in which genomic DNA is translocated into the capsid. TRM1 carries an endonuclease activity that plays an important role for the cleavage of concatemeric viral DNA into unit length genomes. This is Tripartite terminase subunit 1 from Homo sapiens (Human).